Here is a 106-residue protein sequence, read N- to C-terminus: uncharacterized protein (106 aa).

Residues 38 to 106 form a disordered region; the sequence is KGNKKSKAAT…STHLPYHGSY (69 aa). Basic and acidic residues-rich tracts occupy residues 57 to 71 and 82 to 96; these read TRQERDLTDRKHRPE and WKKEVTTRSRPKETS.

It is found in the mitochondrion. This is an uncharacterized protein from Arabidopsis thaliana (Mouse-ear cress).